The primary structure comprises 424 residues: UDP-N-acetylglucosamine 1-carboxyvinyltransferase (424 aa).

22 to 23 (KN) is a phosphoenolpyruvate binding site. Arg93 contributes to the UDP-N-acetyl-alpha-D-glucosamine binding site. Cys117 serves as the catalytic Proton donor. Cys117 bears the 2-(S-cysteinyl)pyruvic acid O-phosphothioketal mark. UDP-N-acetyl-alpha-D-glucosamine is bound by residues 122–126 (RPIDL), Asp307, and Val329.

The protein belongs to the EPSP synthase family. MurA subfamily.

It localises to the cytoplasm. The catalysed reaction is phosphoenolpyruvate + UDP-N-acetyl-alpha-D-glucosamine = UDP-N-acetyl-3-O-(1-carboxyvinyl)-alpha-D-glucosamine + phosphate. Its pathway is cell wall biogenesis; peptidoglycan biosynthesis. Functionally, cell wall formation. Adds enolpyruvyl to UDP-N-acetylglucosamine. The chain is UDP-N-acetylglucosamine 1-carboxyvinyltransferase from Pelodictyon phaeoclathratiforme (strain DSM 5477 / BU-1).